We begin with the raw amino-acid sequence, 493 residues long: Probable cytosol aminopeptidase (493 aa).

Lysine 262 and aspartate 267 together coordinate Mn(2+). Lysine 274 is a catalytic residue. Residues aspartate 285, aspartate 344, and glutamate 346 each coordinate Mn(2+). Arginine 348 is a catalytic residue.

It belongs to the peptidase M17 family. The cofactor is Mn(2+).

The protein resides in the cytoplasm. The catalysed reaction is Release of an N-terminal amino acid, Xaa-|-Yaa-, in which Xaa is preferably Leu, but may be other amino acids including Pro although not Arg or Lys, and Yaa may be Pro. Amino acid amides and methyl esters are also readily hydrolyzed, but rates on arylamides are exceedingly low.. It carries out the reaction Release of an N-terminal amino acid, preferentially leucine, but not glutamic or aspartic acids.. Presumably involved in the processing and regular turnover of intracellular proteins. Catalyzes the removal of unsubstituted N-terminal amino acids from various peptides. The protein is Probable cytosol aminopeptidase of Xanthomonas campestris pv. campestris (strain 8004).